Consider the following 356-residue polypeptide: UDP-N-acetylglucosamine--N-acetylmuramyl-(pentapeptide) pyrophosphoryl-undecaprenol N-acetylglucosamine transferase (356 aa).

Residues S195 and Q287 each coordinate UDP-N-acetyl-alpha-D-glucosamine.

This sequence belongs to the glycosyltransferase 28 family. MurG subfamily.

Its subcellular location is the cell membrane. It catalyses the reaction Mur2Ac(oyl-L-Ala-gamma-D-Glu-L-Lys-D-Ala-D-Ala)-di-trans,octa-cis-undecaprenyl diphosphate + UDP-N-acetyl-alpha-D-glucosamine = beta-D-GlcNAc-(1-&gt;4)-Mur2Ac(oyl-L-Ala-gamma-D-Glu-L-Lys-D-Ala-D-Ala)-di-trans,octa-cis-undecaprenyl diphosphate + UDP + H(+). It functions in the pathway cell wall biogenesis; peptidoglycan biosynthesis. Its function is as follows. Cell wall formation. Catalyzes the transfer of a GlcNAc subunit on undecaprenyl-pyrophosphoryl-MurNAc-pentapeptide (lipid intermediate I) to form undecaprenyl-pyrophosphoryl-MurNAc-(pentapeptide)GlcNAc (lipid intermediate II). This Streptococcus sanguinis (strain SK36) protein is UDP-N-acetylglucosamine--N-acetylmuramyl-(pentapeptide) pyrophosphoryl-undecaprenol N-acetylglucosamine transferase.